Reading from the N-terminus, the 407-residue chain is FMN-dependent alpha-hydroxy acid dehydrogenase PB1A11.03 (407 aa).

The region spanning 28–406 (QRPQITVDGR…DLNRDVLYKE (379 aa)) is the FMN hydroxy acid dehydrogenase domain. Tyr54 is an a 2-oxocarboxylate binding site. The FMN site is built by Ser136 and Gln158. Tyr160 lines the a 2-oxocarboxylate pocket. Thr188 serves as a coordination point for FMN. Arg197 is an a 2-oxocarboxylate binding site. Lys277 contacts FMN. His301 serves as the catalytic Proton acceptor. Residue Arg304 participates in a 2-oxocarboxylate binding. FMN contacts are provided by residues 332–336 (DSGVR) and 355–356 (GR).

Belongs to the FMN-dependent alpha-hydroxy acid dehydrogenase family. FMN serves as cofactor.

Its subcellular location is the cytoplasm. It localises to the nucleus. In Schizosaccharomyces pombe (strain 972 / ATCC 24843) (Fission yeast), this protein is FMN-dependent alpha-hydroxy acid dehydrogenase PB1A11.03.